The primary structure comprises 279 residues: Undecaprenyl-diphosphatase (279 aa).

7 helical membrane-spanning segments follow: residues 10–30 (FICF…FLPI), 48–68 (LGVS…IYYF), 96–116 (LFLY…LIKL), 128–148 (GLFS…LSEI), 203–223 (SFLV…FSLF), 229–249 (IDII…IFAI), and 259–279 (NNTL…LTTL).

Belongs to the UppP family.

Its subcellular location is the cell inner membrane. It catalyses the reaction di-trans,octa-cis-undecaprenyl diphosphate + H2O = di-trans,octa-cis-undecaprenyl phosphate + phosphate + H(+). Its function is as follows. Catalyzes the dephosphorylation of undecaprenyl diphosphate (UPP). Confers resistance to bacitracin. The sequence is that of Undecaprenyl-diphosphatase from Prochlorococcus marinus (strain NATL2A).